The primary structure comprises 133 residues: uncharacterized protein (133 aa).

The interval 82–133 (KIKSYSPSRSQKALNNPSKIRTKQTNNDTTIQQSNNTTSTNTKPSSNTNTQQ) is disordered. Residues 86-100 (YSPSRSQKALNNPSK) are compositionally biased toward polar residues. A compositionally biased stretch (low complexity) spans 105 to 133 (QTNNDTTIQQSNNTTSTNTKPSSNTNTQQ).

This is an uncharacterized protein from Acidianus convivator (ABV).